Consider the following 177-residue polypeptide: MSEMATIARPYAKAAFDFAVEKGELSQWAQMLTFCSEVAKNEDVAQLLDGAIASEQLAEIFISICGEQLNEFGQNFINVMAENGRLKVLPGVLEQFILLQHEFEKVIDADVTSAIELTEQQKADIGAKLEARLERKVKLNCSVDETLLAGVIIRAGDLVIDNSARGRLGRLSETLQS.

This sequence belongs to the ATPase delta chain family. F-type ATPases have 2 components, F(1) - the catalytic core - and F(0) - the membrane proton channel. F(1) has five subunits: alpha(3), beta(3), gamma(1), delta(1), epsilon(1). F(0) has three main subunits: a(1), b(2) and c(10-14). The alpha and beta chains form an alternating ring which encloses part of the gamma chain. F(1) is attached to F(0) by a central stalk formed by the gamma and epsilon chains, while a peripheral stalk is formed by the delta and b chains.

It is found in the cell inner membrane. F(1)F(0) ATP synthase produces ATP from ADP in the presence of a proton or sodium gradient. F-type ATPases consist of two structural domains, F(1) containing the extramembraneous catalytic core and F(0) containing the membrane proton channel, linked together by a central stalk and a peripheral stalk. During catalysis, ATP synthesis in the catalytic domain of F(1) is coupled via a rotary mechanism of the central stalk subunits to proton translocation. Its function is as follows. This protein is part of the stalk that links CF(0) to CF(1). It either transmits conformational changes from CF(0) to CF(1) or is implicated in proton conduction. The sequence is that of ATP synthase subunit delta from Aliivibrio fischeri (strain ATCC 700601 / ES114) (Vibrio fischeri).